The chain runs to 229 residues: Putative germin-like protein 3-4 (229 aa).

The first 31 residues, 1–31, serve as a signal peptide directing secretion; that stretch reads MEHSFKTITAGVVFVVLLLQQAPVLIRATDA. A disulfide bridge connects residues Cys38 and Cys53. The Cupin type-1 domain maps to 67–219; that stretch reads SKIATGGDVN…ALRVDTGVVE (153 aa). Asn80 and Asn83 each carry an N-linked (GlcNAc...) asparagine glycan. Residues His116, His118, Glu123, and His165 each coordinate Mn(2+).

The protein belongs to the germin family. In terms of assembly, oligomer (believed to be a pentamer but probably hexamer).

It is found in the secreted. It localises to the extracellular space. The protein resides in the apoplast. In terms of biological role, may play a role in plant defense. Probably has no oxalate oxidase activity even if the active site is conserved. The polypeptide is Putative germin-like protein 3-4 (Oryza sativa subsp. japonica (Rice)).